Consider the following 498-residue polypeptide: Type II secretion system protein E (498 aa).

261–268 (GPTGSGKS) is a binding site for ATP. 4 residues coordinate Zn(2+): C394, C397, C425, and C428.

This sequence belongs to the GSP E family. As to quaternary structure, forms homooligomers; most probably hexamers. Interacts with OutL/GspL. Zn(2+) is required as a cofactor.

The protein localises to the cell inner membrane. It carries out the reaction ATP + H2O + cellular proteinSide 1 = ADP + phosphate + cellular proteinSide 2.. Functionally, ATPase component of the type II secretion system required for the energy-dependent secretion of extracellular factors such as proteases and toxins from the periplasm. Acts as a molecular motor to provide the energy that is required for assembly of the pseudopilus and the extrusion of substrates generated in the cytoplasm. This chain is Type II secretion system protein E (outE), found in Pectobacterium carotovorum subsp. carotovorum (Erwinia carotovora subsp. carotovora).